The primary structure comprises 63 residues: Large ribosomal subunit protein bL32 (63 aa).

Residues 1–23 (MATPKAKVSKSRRDKRRAQFTAR) are disordered. Over residues 7 to 18 (KVSKSRRDKRRA) the composition is skewed to basic residues.

The protein belongs to the bacterial ribosomal protein bL32 family.

The polypeptide is Large ribosomal subunit protein bL32 (Prosthecochloris aestuarii (strain DSM 271 / SK 413)).